The chain runs to 505 residues: Annexin A11 (505 aa).

Composition is skewed to pro residues over residues 1–17 (MSYP…PPAA) and 99–160 (PVPP…PVPL). Disordered stretches follow at residues 1–38 (MSYP…PPIG) and 84–199 (PVPP…DAPG). A compositionally biased stretch (low complexity) spans 161–177 (PGQQQPVPSYPGYPGSG). Annexin repeat units lie at residues 200-271 (FDPL…ALMK), 272-343 (TPVL…SLSQ), 355-427 (SLAQ…AVVK), and 431-502 (NTPA…KICG). N6-acetyllysine occurs at positions 248 and 255. Lys479 is subject to N6-acetyllysine.

The protein belongs to the annexin family. In terms of assembly, interacts with S100A6. Interacts with PDCD6 in a calcium-dependent manner. Interacts with KIF23 during cytokinesis.

Its subcellular location is the cytoplasm. It localises to the melanosome. The protein resides in the nucleus envelope. The protein localises to the nucleus. It is found in the nucleoplasm. Its subcellular location is the cytoskeleton. It localises to the spindle. Functionally, binds specifically to calcyclin in a calcium-dependent manner. Required for midbody formation and completion of the terminal phase of cytokinesis. In Homo sapiens (Human), this protein is Annexin A11 (ANXA11).